The sequence spans 303 residues: Quinolinate synthase (303 aa).

Positions 24 and 41 each coordinate iminosuccinate. Cys-86 contributes to the [4Fe-4S] cluster binding site. Iminosuccinate contacts are provided by residues 112-114 and Ser-129; that span reads YVN. [4Fe-4S] cluster is bound at residue Cys-172. Iminosuccinate contacts are provided by residues 198–200 and Thr-215; that span reads HPE. [4Fe-4S] cluster is bound at residue Cys-260.

It belongs to the quinolinate synthase family. Type 2 subfamily. [4Fe-4S] cluster serves as cofactor.

It is found in the cytoplasm. The enzyme catalyses iminosuccinate + dihydroxyacetone phosphate = quinolinate + phosphate + 2 H2O + H(+). Its pathway is cofactor biosynthesis; NAD(+) biosynthesis; quinolinate from iminoaspartate: step 1/1. Functionally, catalyzes the condensation of iminoaspartate with dihydroxyacetone phosphate to form quinolinate. This is Quinolinate synthase from Clostridium kluyveri (strain NBRC 12016).